The sequence spans 596 residues: Elongation factor 4 (596 aa).

Residues 2–184 (KHIRNFSIIA…VIVAKIPPPE (183 aa)) form the tr-type G domain. GTP-binding positions include 14-19 (DHGKST) and 131-134 (NKID).

The protein belongs to the TRAFAC class translation factor GTPase superfamily. Classic translation factor GTPase family. LepA subfamily.

The protein resides in the cell inner membrane. It catalyses the reaction GTP + H2O = GDP + phosphate + H(+). Required for accurate and efficient protein synthesis under certain stress conditions. May act as a fidelity factor of the translation reaction, by catalyzing a one-codon backward translocation of tRNAs on improperly translocated ribosomes. Back-translocation proceeds from a post-translocation (POST) complex to a pre-translocation (PRE) complex, thus giving elongation factor G a second chance to translocate the tRNAs correctly. Binds to ribosomes in a GTP-dependent manner. The protein is Elongation factor 4 of Shewanella putrefaciens (strain CN-32 / ATCC BAA-453).